A 251-amino-acid chain; its full sequence is MIKVSVVGAKGRMGSHVVEAVNKAEDTQLALALDADDDLTQVTTDNTDVVVEFTVPSVSLNNVLTLIGQGVDVVVGTTGWTDEKLTQVKSAIANGPKPETQKVFIAPNFAISAVLADYFATKAARYFESAEVIELHHPTKVDAPSGTAIHTAHGIAEARKAAGLAPVPDATETDGGSRGQVVDGIHVHAVRLRGLNAHEEVLFGNAGEQLTIRADSFDRTSFMPGVLLAVRKLAGDAPAGLTIGLDHFLDL.

Residues 8 to 13 (GAKGRM), 76 to 78 (GTT), and 106 to 109 (APNF) contribute to the NAD(+) site. The Proton donor/acceptor role is filled by His-136. Position 137 (His-137) interacts with (S)-2,3,4,5-tetrahydrodipicolinate. Catalysis depends on Lys-140, which acts as the Proton donor. 146 to 147 (GT) provides a ligand contact to (S)-2,3,4,5-tetrahydrodipicolinate.

Belongs to the DapB family.

It is found in the cytoplasm. It catalyses the reaction (S)-2,3,4,5-tetrahydrodipicolinate + NAD(+) + H2O = (2S,4S)-4-hydroxy-2,3,4,5-tetrahydrodipicolinate + NADH + H(+). The enzyme catalyses (S)-2,3,4,5-tetrahydrodipicolinate + NADP(+) + H2O = (2S,4S)-4-hydroxy-2,3,4,5-tetrahydrodipicolinate + NADPH + H(+). Its pathway is amino-acid biosynthesis; L-lysine biosynthesis via DAP pathway; (S)-tetrahydrodipicolinate from L-aspartate: step 4/4. Functionally, catalyzes the conversion of 4-hydroxy-tetrahydrodipicolinate (HTPA) to tetrahydrodipicolinate. The chain is 4-hydroxy-tetrahydrodipicolinate reductase from Bifidobacterium longum subsp. infantis (strain ATCC 15697 / DSM 20088 / JCM 1222 / NCTC 11817 / S12).